A 188-amino-acid chain; its full sequence is Pyridoxal 5'-phosphate synthase subunit PdxT (188 aa).

Gly-47–Ser-49 contacts L-glutamine. The active-site Nucleophile is Cys-79. Residues Arg-106 and Ile-134–Arg-135 each bind L-glutamine. Catalysis depends on charge relay system residues His-169 and Glu-171.

This sequence belongs to the glutaminase PdxT/SNO family. As to quaternary structure, in the presence of PdxS, forms a dodecamer of heterodimers. Only shows activity in the heterodimer.

It catalyses the reaction aldehydo-D-ribose 5-phosphate + D-glyceraldehyde 3-phosphate + L-glutamine = pyridoxal 5'-phosphate + L-glutamate + phosphate + 3 H2O + H(+). The enzyme catalyses L-glutamine + H2O = L-glutamate + NH4(+). Its pathway is cofactor biosynthesis; pyridoxal 5'-phosphate biosynthesis. Its function is as follows. Catalyzes the hydrolysis of glutamine to glutamate and ammonia as part of the biosynthesis of pyridoxal 5'-phosphate. The resulting ammonia molecule is channeled to the active site of PdxS. The protein is Pyridoxal 5'-phosphate synthase subunit PdxT of Caldicellulosiruptor bescii (strain ATCC BAA-1888 / DSM 6725 / KCTC 15123 / Z-1320) (Anaerocellum thermophilum).